Consider the following 199-residue polypeptide: MDKIREKLSNLKLEAESWQEKYEELKEKNKDLEQENVEKENQIKSLTVKNQQLEDEIEKLEAGLSDSKQTEQDNVEKENQIKSLTVKNHQLEEEIEKLEAELAESKQLSEDSHHLQSNNDNFSKKNQQLEEDLEESDTKLKETTEKLRESDLKADQLERRVAALEEQREEWERKNEELTVKYEDAKKELDEIAASLENL.

Positions 1 to 199 form a coiled coil; sequence MDKIREKLSN…DEIAASLENL (199 aa). Residues Lys-39 and Lys-59 each participate in a glycyl lysine isopeptide (Lys-Gly) (interchain with G-Cter in ubiquitin) cross-link. Disordered stretches follow at residues 59–81 and 102–147; these read KLEA…ENQI and LAES…TEKL. Composition is skewed to basic and acidic residues over residues 68-80 and 102-114; these read KQTE…KENQ and LAES…DSHH. Over residues 115-126 the composition is skewed to polar residues; that stretch reads LQSNNDNFSKKN. The span at 136–147 shows a compositional bias: basic and acidic residues; sequence SDTKLKETTEKL. Lys-187 is covalently cross-linked (Glycyl lysine isopeptide (Lys-Gly) (interchain with G-Cter in ubiquitin)). Ser-195 carries the phosphoserine modification.

As to quaternary structure, homodimer.

It is found in the cytoplasm. It localises to the cytoskeleton. This chain is Tropomyosin-1 (TPM1), found in Saccharomyces cerevisiae (strain ATCC 204508 / S288c) (Baker's yeast).